Reading from the N-terminus, the 188-residue chain is Glandular kallikrein-3, submandibular (188 aa).

The region spanning 1–185 is the Peptidase S1 domain; the sequence is NYHVLLGQNN…FTSWIKEVMK (185 aa). Residues N10 and N36 are each glycosylated (N-linked (GlcNAc...) asparagine). The Charge relay system role is filled by D47. 3 disulfides stabilise this stretch: C79–C146, C111–C125, and C136–C161. Residue S140 is the Charge relay system of the active site.

Belongs to the peptidase S1 family. Kallikrein subfamily.

The enzyme catalyses Preferential cleavage of Arg-|-Xaa bonds in small molecule substrates. Highly selective action to release kallidin (lysyl-bradykinin) from kininogen involves hydrolysis of Met-|-Xaa or Leu-|-Xaa.. Glandular kallikreins cleave Met-Lys and Arg-Ser bonds in kininogen to release Lys-bradykinin. The polypeptide is Glandular kallikrein-3, submandibular (Klk3) (Rattus norvegicus (Rat)).